We begin with the raw amino-acid sequence, 692 residues long: Elongation factor G (692 aa).

Residues 8–282 form the tr-type G domain; sequence EKTRNIGIMA…AVIDYLPSPL (275 aa). GTP is bound by residues 17–24, 81–85, and 135–138; these read AHVDAGKT, DTPGH, and NKMD.

It belongs to the TRAFAC class translation factor GTPase superfamily. Classic translation factor GTPase family. EF-G/EF-2 subfamily.

It localises to the cytoplasm. Functionally, catalyzes the GTP-dependent ribosomal translocation step during translation elongation. During this step, the ribosome changes from the pre-translocational (PRE) to the post-translocational (POST) state as the newly formed A-site-bound peptidyl-tRNA and P-site-bound deacylated tRNA move to the P and E sites, respectively. Catalyzes the coordinated movement of the two tRNA molecules, the mRNA and conformational changes in the ribosome. The chain is Elongation factor G from Streptococcus agalactiae serotype III (strain NEM316).